Here is a 711-residue protein sequence, read N- to C-terminus: Ribosomal RNA large subunit methyltransferase K/L (711 aa).

The 112-residue stretch at 43–154 (LAYRITLWSR…RGQITLGINF (112 aa)) folds into the THUMP domain.

This sequence belongs to the methyltransferase superfamily. RlmKL family.

It is found in the cytoplasm. The catalysed reaction is guanosine(2445) in 23S rRNA + S-adenosyl-L-methionine = N(2)-methylguanosine(2445) in 23S rRNA + S-adenosyl-L-homocysteine + H(+). It carries out the reaction guanosine(2069) in 23S rRNA + S-adenosyl-L-methionine = N(2)-methylguanosine(2069) in 23S rRNA + S-adenosyl-L-homocysteine + H(+). Functionally, specifically methylates the guanine in position 2445 (m2G2445) and the guanine in position 2069 (m7G2069) of 23S rRNA. The sequence is that of Ribosomal RNA large subunit methyltransferase K/L from Shewanella loihica (strain ATCC BAA-1088 / PV-4).